Reading from the N-terminus, the 158-residue chain is Protein EOLA1 (158 aa).

The region spanning 6-92 (LSFRQPYAGF…IAGLVDIGET (87 aa)) is the ASCH domain.

The protein belongs to the EOLA family. In terms of assembly, interacts with MT2A. Expressed primarily in heart, skeletal muscle, kidney, liver and placenta. Relatively high level of expression in spleen, colon and small intestine. Almost no expression in brain, thymus, lung and peripheral blood leukocytes. Expressed in epithelial cells (at protein level).

Functionally, may play a role in cell protection during the inflammatory response. In epithelial cells, negatively regulates IL6 production and apoptosis through the regulation of MT2A expression. In Homo sapiens (Human), this protein is Protein EOLA1.